The sequence spans 148 residues: MSSEPPPPPLQPPTHQTSVGLLDTPRTRDRSPSPLRGNVVPSPLPTRRTRTFSATVRASQGPVYKGVCKCFCRSKGHGFITPADGGPDIFLHISDVEGEYVPVEGDEVTYKMCSIPPKNEKLQAVEVVITHLAPGTKHETWSGHVISN.

Pro residues predominate over residues 1–12 (MSSEPPPPPLQP). The interval 1–47 (MSSEPPPPPLQPPTHQTSVGLLDTPRTRDRSPSPLRGNVVPSPLPTR) is disordered. An N-acetylserine modification is found at S2. Phosphoserine is present on residues S31, S33, and S42. T46 is modified (phosphothreonine). A phosphoserine mark is found at S53 and S59. The CSD domain occupies 63-130 (VYKGVCKCFC…KLQAVEVVIT (68 aa)). The residue at position 147 (S147) is a Phosphoserine.

Homodimer. Interacts with STYX. Can be phosphorylated by DYRK2 (in vitro). Dephosphorylated by calcineurin in a Ca(2+) dependent manner.

It localises to the cytoplasm. The protein resides in the P-body. The protein localises to the cytoplasmic granule. Its function is as follows. Binds mRNA and regulates the stability of target mRNA. This chain is Calcium-regulated heat stable protein 1 (Carhsp1), found in Mus musculus (Mouse).